A 112-amino-acid polypeptide reads, in one-letter code: MPPKNCTHLGGCNSDCLTRSEIQALFREAINTLKHTMNTEDVCAHMLDIVSFERIKEYIRANLGHFTVITDKCSKRKVCLHHKRIARLLGIKKIYHQEYKRVVSKVYKNQTW.

The protein belongs to the baculoviridae LEF-11 family.

Functionally, involved in late/very late gene activation. This is Late expression factor 11 (LEF-11) from Bombyx mori nuclear polyhedrosis virus (BmNPV).